The chain runs to 162 residues: MNLYIDLQIASENTVGLPTAAQFQHWVDKALAMEAKTADYPETEITIRIVDEAESHELNLTYRGKDKPTNVLSFPFEVPEGIQLPLLGDLIICRQVVEKEAVEQEKPLEAHWAHLAIHGTLHLLGYDHLTDEEAEEMESLETEIMQSLGFDDPYIAEKTIEE.

Residues histidine 118, histidine 122, and histidine 128 each contribute to the Zn(2+) site.

Belongs to the endoribonuclease YbeY family. Zn(2+) serves as cofactor.

It localises to the cytoplasm. Its function is as follows. Single strand-specific metallo-endoribonuclease involved in late-stage 70S ribosome quality control and in maturation of the 3' terminus of the 16S rRNA. This Glaesserella parasuis serovar 5 (strain SH0165) (Haemophilus parasuis) protein is Endoribonuclease YbeY.